Here is a 489-residue protein sequence, read N- to C-terminus: Betaine aldehyde dehydrogenase (489 aa).

Residues Thr26 and Asp93 each contribute to the K(+) site. 150–152 (GAW) is an NAD(+) binding site. Lys162 serves as the catalytic Charge relay system. 176–179 (KPSE) contributes to the NAD(+) binding site. Val180 serves as a coordination point for K(+). Residue 229–232 (GVET) coordinates NAD(+). Position 245 (Leu245) interacts with K(+). Glu251 serves as the catalytic Proton acceptor. NAD(+) contacts are provided by Gly253, Cys285, and Glu386. Catalysis depends on Cys285, which acts as the Nucleophile. Position 285 is a cysteine sulfenic acid (-SOH) (Cys285). Residues Lys456 and Gly459 each coordinate K(+). Glu463 acts as the Charge relay system in catalysis.

Belongs to the aldehyde dehydrogenase family. As to quaternary structure, dimer of dimers. K(+) serves as cofactor.

It carries out the reaction betaine aldehyde + NAD(+) + H2O = glycine betaine + NADH + 2 H(+). The protein operates within amine and polyamine biosynthesis; betaine biosynthesis via choline pathway; betaine from betaine aldehyde: step 1/1. In terms of biological role, involved in the biosynthesis of the osmoprotectant glycine betaine. Catalyzes the irreversible oxidation of betaine aldehyde to the corresponding acid. In Paraburkholderia phymatum (strain DSM 17167 / CIP 108236 / LMG 21445 / STM815) (Burkholderia phymatum), this protein is Betaine aldehyde dehydrogenase.